Consider the following 2505-residue polypeptide: Fatty acid synthase (2505 aa).

Methionine 1 bears the N-acetylmethionine mark. Residues 1–406 (MEEVVIAGMS…GANVHVILQP (406 aa)) form the Ketosynthase family 3 (KS3) domain. N6-acetyllysine is present on lysine 59. Residue serine 63 is modified to Phosphoserine. The residue at position 70 (lysine 70) is an N6-acetyllysine. Cysteine 161 functions as the For beta-ketoacyl synthase activity in the catalytic mechanism. At serine 207 the chain carries Phosphoserine. Histidine 293 functions as the For beta-ketoacyl synthase activity in the catalytic mechanism. Residue lysine 298 is modified to N6-acetyllysine. The active-site For beta-ketoacyl synthase activity is histidine 331. Residues 429-817 (RTMEAVQGLL…IDINPNALFP (389 aa)) are acyl and malonyl transferases. N6-acetyllysine is present on lysine 528. Serine 581 acts as the For malonyltransferase activity in catalysis. An acyl-CoA-binding positions include 647-648 (DT) and phenylalanine 671. Lysine 673 is subject to N6-acetyllysine. Serine 725 carries the post-translational modification Phosphoserine. Arginine 773 contributes to the an acyl-CoA binding site. Lysine 790 is modified (N6-acetyllysine). The N-terminal hotdog fold stretch occupies residues 844–966 (IPVAEDFPNG…KVYQWEDPDS (123 aa)). Residues 844-1112 (IPVAEDFPNG…TSRRQQEQLV (269 aa)) form the PKS/mFAS DH domain. Histidine 878 functions as the Proton acceptor; for dehydratase activity in the catalytic mechanism. Positions 983-1112 (VSRLTQGEVY…TSRRQQEQLV (130 aa)) are C-terminal hotdog fold. Lysine 993 carries the N6-acetyllysine modification. The active-site Proton donor; for dehydratase activity is the aspartate 1032. Lysine 1276 bears the N6-acetyllysine mark. Cysteine 1464 is subject to S-nitrosocysteine. Phosphoserine is present on residues serine 1578 and serine 1588. The segment at 1629 to 1857 (DVPSSWTLEE…VQVREEEPEA (229 aa)) is enoyl reductase. 1665–1682 (VLIHSGSGGVGQAAISIA) is a binding site for NADP(+). Lysine 1698 carries the N6-(pyridoxal phosphate)lysine; alternate modification. Position 1698 is an N6-acetyllysine; alternate (lysine 1698). N6-acetyllysine is present on residues lysine 1765, lysine 1841, and lysine 1989. 1765–1780 (KFDLSNNHPLGMAIFL) contacts NADP(+). The segment at 1858–2113 (MLPGAQPTLI…VLAEKKAVAH (256 aa)) is beta-ketoacyl reductase. Cysteine 2085 is modified (S-nitrosocysteine). The region spanning 2113-2193 (HGDGEAQRDL…EMSSKAGSDT (81 aa)) is the Carrier domain. The residue at position 2151 (serine 2151) is an O-(pantetheine 4'-phosphoryl)serine; alternate. At serine 2151 the chain carries Phosphoserine; alternate. Phosphoserine is present on residues serine 2191 and serine 2230. The interval 2202 to 2505 (NDTSLKQAQL…AEPRVSVREG (304 aa)) is thioesterase. Serine 2302 (for thioesterase activity) is an active-site residue. Residue lysine 2385 is modified to N6-acetyllysine. Lysine 2443 participates in a covalent cross-link: Glycyl lysine isopeptide (Lys-Gly) (interchain with G-Cter in SUMO2). The active-site For thioesterase activity is histidine 2475.

In terms of assembly, homodimer which is arranged in a head to tail fashion. Interacts with CEACAM1; this interaction is insulin and phosphorylation-dependent; reduces fatty-acid synthase activity. S-nitrosylation of Fatty acid synthase at cysteine residues Cys-1464 or Cys-2085 is important for the enzyme dimerization. In adipocytes, S-nitrosylation of Fatty acid synthase occurs under physiological conditions and gradually increases during adipogenesis.

It localises to the cytoplasm. Its subcellular location is the melanosome. It catalyses the reaction acetyl-CoA + n malonyl-CoA + 2n NADPH + 2n H(+) = a long-chain fatty acid + (n+1) CoA + n CO2 + 2n NADP(+).. It carries out the reaction holo-[ACP] + acetyl-CoA = acetyl-[ACP] + CoA. The catalysed reaction is holo-[ACP] + malonyl-CoA = malonyl-[ACP] + CoA. The enzyme catalyses a fatty acyl-[ACP] + malonyl-[ACP] + H(+) = a 3-oxoacyl-[ACP] + holo-[ACP] + CO2. It catalyses the reaction a (3R)-hydroxyacyl-[ACP] + NADP(+) = a 3-oxoacyl-[ACP] + NADPH + H(+). It carries out the reaction a (3R)-hydroxyacyl-[ACP] = a (2E)-enoyl-[ACP] + H2O. The catalysed reaction is a 2,3-saturated acyl-[ACP] + NADP(+) = a (2E)-enoyl-[ACP] + NADPH + H(+). The enzyme catalyses hexadecanoyl-[ACP] + H2O = hexadecanoate + holo-[ACP] + H(+). It catalyses the reaction acetyl-[ACP] + malonyl-[ACP] + H(+) = 3-oxobutanoyl-[ACP] + holo-[ACP] + CO2. It carries out the reaction 3-oxobutanoyl-[ACP] + NADPH + H(+) = (3R)-hydroxybutanoyl-[ACP] + NADP(+). The catalysed reaction is (3R)-hydroxybutanoyl-[ACP] = (2E)-butenoyl-[ACP] + H2O. The enzyme catalyses (2E)-butenoyl-[ACP] + NADPH + H(+) = butanoyl-[ACP] + NADP(+). It catalyses the reaction butanoyl-[ACP] + malonyl-[ACP] + H(+) = 3-oxohexanoyl-[ACP] + holo-[ACP] + CO2. It carries out the reaction 3-oxohexanoyl-[ACP] + NADPH + H(+) = (3R)-hydroxyhexanoyl-[ACP] + NADP(+). The catalysed reaction is (3R)-hydroxyhexanoyl-[ACP] = (2E)-hexenoyl-[ACP] + H2O. The enzyme catalyses (2E)-hexenoyl-[ACP] + NADPH + H(+) = hexanoyl-[ACP] + NADP(+). It catalyses the reaction hexanoyl-[ACP] + malonyl-[ACP] + H(+) = 3-oxooctanoyl-[ACP] + holo-[ACP] + CO2. It carries out the reaction 3-oxooctanoyl-[ACP] + NADPH + H(+) = (3R)-hydroxyoctanoyl-[ACP] + NADP(+). The catalysed reaction is (3R)-hydroxyoctanoyl-[ACP] = (2E)-octenoyl-[ACP] + H2O. The enzyme catalyses (2E)-octenoyl-[ACP] + NADPH + H(+) = octanoyl-[ACP] + NADP(+). It catalyses the reaction octanoyl-[ACP] + malonyl-[ACP] + H(+) = 3-oxodecanoyl-[ACP] + holo-[ACP] + CO2. It carries out the reaction 3-oxodecanoyl-[ACP] + NADPH + H(+) = (3R)-hydroxydecanoyl-[ACP] + NADP(+). The catalysed reaction is (3R)-hydroxydecanoyl-[ACP] = (2E)-decenoyl-[ACP] + H2O. The enzyme catalyses (2E)-decenoyl-[ACP] + NADPH + H(+) = decanoyl-[ACP] + NADP(+). It catalyses the reaction decanoyl-[ACP] + malonyl-[ACP] + H(+) = 3-oxododecanoyl-[ACP] + holo-[ACP] + CO2. It carries out the reaction 3-oxododecanoyl-[ACP] + NADPH + H(+) = (3R)-hydroxydodecanoyl-[ACP] + NADP(+). The catalysed reaction is (3R)-hydroxydodecanoyl-[ACP] = (2E)-dodecenoyl-[ACP] + H2O. The enzyme catalyses (2E)-dodecenoyl-[ACP] + NADPH + H(+) = dodecanoyl-[ACP] + NADP(+). It catalyses the reaction dodecanoyl-[ACP] + malonyl-[ACP] + H(+) = 3-oxotetradecanoyl-[ACP] + holo-[ACP] + CO2. It carries out the reaction 3-oxotetradecanoyl-[ACP] + NADPH + H(+) = (3R)-hydroxytetradecanoyl-[ACP] + NADP(+). The catalysed reaction is (3R)-hydroxytetradecanoyl-[ACP] = (2E)-tetradecenoyl-[ACP] + H2O. The enzyme catalyses (2E)-tetradecenoyl-[ACP] + NADPH + H(+) = tetradecanoyl-[ACP] + NADP(+). It catalyses the reaction tetradecanoyl-[ACP] + malonyl-[ACP] + H(+) = 3-oxohexadecanoyl-[ACP] + holo-[ACP] + CO2. It carries out the reaction 3-oxohexadecanoyl-[ACP] + NADPH + H(+) = (3R)-hydroxyhexadecanoyl-[ACP] + NADP(+). The catalysed reaction is (3R)-hydroxyhexadecanoyl-[ACP] = (2E)-hexadecenoyl-[ACP] + H2O. The enzyme catalyses (2E)-hexadecenoyl-[ACP] + NADPH + H(+) = hexadecanoyl-[ACP] + NADP(+). It catalyses the reaction hexadecanoyl-[ACP] + malonyl-[ACP] + H(+) = 3-oxooctadecanoyl-[ACP] + holo-[ACP] + CO2. It carries out the reaction 3-oxooctadecanoyl-[ACP] + NADPH + H(+) = (3R)-hydroxyoctadecanoyl-[ACP] + NADP(+). The catalysed reaction is (3R)-hydroxyoctadecanoyl-[ACP] = (2E)-octadecenoyl-[ACP] + H2O. The enzyme catalyses (2E)-octadecenoyl-[ACP] + NADPH + H(+) = octadecanoyl-[ACP] + NADP(+). It catalyses the reaction tetradecanoyl-[ACP] + H2O = tetradecanoate + holo-[ACP] + H(+). It carries out the reaction octadecanoyl-[ACP] + H2O = octadecanoate + holo-[ACP] + H(+). The protein operates within lipid metabolism; fatty acid biosynthesis. With respect to regulation, cerulenin, a potent non-competitive pharmacological inhibitor of FAS, binds covalently to the active site of the condensing enzyme region, inactivating a key enzyme step in fatty acid synthesis. Another inhibitor, though less efficient, is C75, a member of the alpha-methylene-gamma-butyrolactone chemical class, also proposed as an antitumour and anti-obesity agent. Its function is as follows. Fatty acid synthetase is a multifunctional enzyme that catalyzes the de novo biosynthesis of long-chain saturated fatty acids starting from acetyl-CoA and malonyl-CoA in the presence of NADPH. This multifunctional protein contains 7 catalytic activities and a site for the binding of the prosthetic group 4'-phosphopantetheine of the acyl carrier protein ([ACP]) domain. This chain is Fatty acid synthase (Fasn), found in Rattus norvegicus (Rat).